The sequence spans 490 residues: Cobyric acid synthase (490 aa).

One can recognise a GATase cobBQ-type domain in the interval 250 to 432; sequence QLEIVVIRLP…LHGLLDNHAW (183 aa). Cys328 serves as the catalytic Nucleophile. The active site involves His424.

It belongs to the CobB/CobQ family. CobQ subfamily.

It participates in cofactor biosynthesis; adenosylcobalamin biosynthesis. In terms of biological role, catalyzes amidations at positions B, D, E, and G on adenosylcobyrinic A,C-diamide. NH(2) groups are provided by glutamine, and one molecule of ATP is hydrogenolyzed for each amidation. This chain is Cobyric acid synthase, found in Gloeobacter violaceus (strain ATCC 29082 / PCC 7421).